The sequence spans 364 residues: Cobalt-precorrin-5B C(1)-methyltransferase (364 aa).

The protein belongs to the CbiD family.

The catalysed reaction is Co-precorrin-5B + S-adenosyl-L-methionine = Co-precorrin-6A + S-adenosyl-L-homocysteine. Its pathway is cofactor biosynthesis; adenosylcobalamin biosynthesis; cob(II)yrinate a,c-diamide from sirohydrochlorin (anaerobic route): step 6/10. In terms of biological role, catalyzes the methylation of C-1 in cobalt-precorrin-5B to form cobalt-precorrin-6A. This Thermoplasma acidophilum (strain ATCC 25905 / DSM 1728 / JCM 9062 / NBRC 15155 / AMRC-C165) protein is Cobalt-precorrin-5B C(1)-methyltransferase.